An 82-amino-acid polypeptide reads, in one-letter code: Putative membrane protein insertion efficiency factor (82 aa).

Belongs to the UPF0161 family.

Its subcellular location is the cell inner membrane. Functionally, could be involved in insertion of integral membrane proteins into the membrane. The chain is Putative membrane protein insertion efficiency factor from Rickettsia massiliae (strain Mtu5).